We begin with the raw amino-acid sequence, 443 residues long: Glucose-6-phosphate isomerase (443 aa).

E285 serves as the catalytic Proton donor. Residues H306 and K420 contribute to the active site.

Belongs to the GPI family.

Its subcellular location is the cytoplasm. It carries out the reaction alpha-D-glucose 6-phosphate = beta-D-fructose 6-phosphate. It participates in carbohydrate biosynthesis; gluconeogenesis. Its pathway is carbohydrate degradation; glycolysis; D-glyceraldehyde 3-phosphate and glycerone phosphate from D-glucose: step 2/4. Functionally, catalyzes the reversible isomerization of glucose-6-phosphate to fructose-6-phosphate. This Staphylococcus aureus (strain Mu3 / ATCC 700698) protein is Glucose-6-phosphate isomerase.